Here is a 429-residue protein sequence, read N- to C-terminus: UDP-N-acetylglucosamine 1-carboxyvinyltransferase (429 aa).

Residue 22–23 (KN) participates in phosphoenolpyruvate binding. R93 serves as a coordination point for UDP-N-acetyl-alpha-D-glucosamine. The active-site Proton donor is C117. Residue C117 is modified to 2-(S-cysteinyl)pyruvic acid O-phosphothioketal. Residues 122–126 (RPVDQ), D313, and I335 each bind UDP-N-acetyl-alpha-D-glucosamine.

Belongs to the EPSP synthase family. MurA subfamily.

It localises to the cytoplasm. It catalyses the reaction phosphoenolpyruvate + UDP-N-acetyl-alpha-D-glucosamine = UDP-N-acetyl-3-O-(1-carboxyvinyl)-alpha-D-glucosamine + phosphate. The protein operates within cell wall biogenesis; peptidoglycan biosynthesis. In terms of biological role, cell wall formation. Adds enolpyruvyl to UDP-N-acetylglucosamine. The sequence is that of UDP-N-acetylglucosamine 1-carboxyvinyltransferase from Variovorax paradoxus (strain S110).